Here is a 71-residue protein sequence, read N- to C-terminus: Putative membrane protein insertion efficiency factor (71 aa).

It belongs to the UPF0161 family.

The protein resides in the cell membrane. Functionally, could be involved in insertion of integral membrane proteins into the membrane. This Desulforudis audaxviator (strain MP104C) protein is Putative membrane protein insertion efficiency factor.